We begin with the raw amino-acid sequence, 248 residues long: Small ribosomal subunit protein uS3 (248 aa).

One can recognise a KH type-2 domain in the interval 39 to 108 (IRKLVSQKLA…TVAVNVAEIP (70 aa)). The segment at 212–248 (KTETLARPPRKSDERRREDGERPSRRRPTARRRPGGE) is disordered. Positions 221 to 234 (RKSDERRREDGERP) are enriched in basic and acidic residues. Residues 235 to 248 (SRRRPTARRRPGGE) are compositionally biased toward basic residues.

The protein belongs to the universal ribosomal protein uS3 family. As to quaternary structure, part of the 30S ribosomal subunit. Forms a tight complex with proteins S10 and S14.

Binds the lower part of the 30S subunit head. Binds mRNA in the 70S ribosome, positioning it for translation. This Deinococcus geothermalis (strain DSM 11300 / CIP 105573 / AG-3a) protein is Small ribosomal subunit protein uS3.